We begin with the raw amino-acid sequence, 319 residues long: Thioredoxin reductase (319 aa).

FAD-binding positions include 11–14 (SGPA), 40–41 (IA), glutamine 45, asparagine 54, valine 87, cysteine 145, aspartate 288, and 295–297 (RQA). Residues cysteine 142 and cysteine 145 are joined by a disulfide bond.

It belongs to the class-II pyridine nucleotide-disulfide oxidoreductase family. In terms of assembly, homodimer. Requires FAD as cofactor.

The protein resides in the cytoplasm. It carries out the reaction [thioredoxin]-dithiol + NADP(+) = [thioredoxin]-disulfide + NADPH + H(+). The protein is Thioredoxin reductase (TRR1) of Yarrowia lipolytica (strain CLIB 122 / E 150) (Yeast).